A 441-amino-acid polypeptide reads, in one-letter code: Divalent metal cation transporter MntH (441 aa).

11 consecutive transmembrane segments (helical) span residues 41–61 (TGIA…IGYM), 74–94 (AAYG…AMLF), 116–136 (HFPA…AMAT), 141–161 (FLGG…AGMI), 183–203 (AAIA…LMIA), 223–243 (AALT…TLYL), 271–291 (VVVA…MAAS), 311–331 (IPVL…TSGV), 360–380 (AVTI…TRAM), 381–401 (VASQ…LLIL), and 419–439 (IVAG…VWAA).

The protein belongs to the NRAMP family.

It localises to the cell inner membrane. Functionally, h(+)-stimulated, divalent metal cation uptake system. In Burkholderia ambifaria (strain ATCC BAA-244 / DSM 16087 / CCUG 44356 / LMG 19182 / AMMD) (Burkholderia cepacia (strain AMMD)), this protein is Divalent metal cation transporter MntH.